The following is a 255-amino-acid chain: tRNA pseudouridine synthase A (255 aa).

The Nucleophile role is filled by D52. Y111 lines the substrate pocket.

Belongs to the tRNA pseudouridine synthase TruA family. As to quaternary structure, homodimer.

The catalysed reaction is uridine(38/39/40) in tRNA = pseudouridine(38/39/40) in tRNA. Functionally, formation of pseudouridine at positions 38, 39 and 40 in the anticodon stem and loop of transfer RNAs. The chain is tRNA pseudouridine synthase A from Cereibacter sphaeroides (strain KD131 / KCTC 12085) (Rhodobacter sphaeroides).